Reading from the N-terminus, the 474-residue chain is Nitric oxide reductase subunit B (474 aa).

Residues 19–39 (YFVFALILFVGQVLFGLIMGL) traverse the membrane as a helical segment. Histidine 60 is a heme b binding site. The next 8 helical transmembrane spans lie at 61–81 (TNLL…YLIP), 95–115 (IILF…YLFV), 145–165 (IGIV…MLKG), 169–189 (VVST…LFAF), 207–227 (HLWV…FVLI), 243–263 (VIIA…FFWI), 270–290 (LWVG…MVLF), and 308–328 (SLWA…WGFM). Residues histidine 207, histidine 258, and histidine 259 each contribute to the Fe cation site. Residues histidine 347 and histidine 349 each contribute to the heme b site. The next 3 helical transmembrane spans lie at 348-368 (GHLA…SYAM), 390-410 (FWLM…AGVV), and 433-453 (LAIF…GLVC).

Belongs to the heme-copper respiratory oxidase family. In terms of assembly, heterodimer of cytochromes b (large subunit) and c (small subunit).

The protein resides in the cell membrane. The enzyme catalyses nitrous oxide + 2 Fe(III)-[cytochrome c] + H2O = 2 nitric oxide + 2 Fe(II)-[cytochrome c] + 2 H(+). It participates in nitrogen metabolism; nitrate reduction (denitrification); dinitrogen from nitrate: step 3/4. In terms of biological role, component of the anaerobic respiratory chain that transforms nitrate to dinitrogen (denitrification). NorB is the catalytic subunit of the enzyme complex. Shows proton pump activity across the membrane in denitrifying bacterial cells. The mononitrogen reduction is probably coupled to electron transport phosphorylation. This chain is Nitric oxide reductase subunit B (norB), found in Stutzerimonas stutzeri (Pseudomonas stutzeri).